A 272-amino-acid chain; its full sequence is PHD finger protein ALFIN-LIKE 6 (272 aa).

Positions 1-23 are enriched in gly residues; the sequence is MEGGGGGGGGGGGGGGGGGGGGA. Disordered regions lie at residues 1 to 24 and 162 to 218; these read MEGG…GGAP and QAKE…DNTL. Positions 168–182 are enriched in low complexity; it reads PNSSSKSNKPSSKVQ. The segment covering 183 to 200 has biased composition (basic and acidic residues); it reads SKAESRSKSKLSAPKDEE. Positions 201-214 are enriched in acidic residues; sequence GSGDDEGEEEEDDH. The PHD-type zinc finger occupies 216–268; it reads NTLCGTCGTNDGKDEFWICCDNCEKWYHGKCVKITPARAEHIKQYKCPDCTNK.

The protein belongs to the Alfin family.

The protein localises to the nucleus. In terms of biological role, histone-binding component that specifically recognizes H3 tails trimethylated on 'Lys-4' (H3K4me3), which mark transcription start sites of virtually all active genes. This Oryza sativa subsp. japonica (Rice) protein is PHD finger protein ALFIN-LIKE 6.